The following is a 554-amino-acid chain: Terpene synthase 17 (554 aa).

The Mg(2+) site is built by D306, D310, and E458. The DDXXD motif motif lies at 306-310 (DDTYD).

The protein belongs to the terpene synthase family. Tpsa subfamily. Requires Mg(2+) as cofactor. It depends on Mn(2+) as a cofactor. As to expression, mostly expressed in stem and trichomes, to a lower extent in leaves, flowers and roots and, at low levels, in fruits.

The catalysed reaction is (2Z,6Z)-farnesyl diphosphate = beta-bisabolene + diphosphate. It catalyses the reaction (2E,6E)-farnesyl diphosphate = (+)-valencene + diphosphate. It carries out the reaction (2E,6E)-farnesyl diphosphate = (E)-beta-farnesene + diphosphate. The enzyme catalyses (2E,6E)-farnesyl diphosphate = gamma-gurjunene + diphosphate. The catalysed reaction is (2Z,6Z)-farnesyl diphosphate = (E)-gamma-bisabolene + diphosphate. It catalyses the reaction (2E)-geranyl diphosphate = limonene + diphosphate. It carries out the reaction (2E)-geranyl diphosphate = beta-myrcene + diphosphate. The enzyme catalyses (2E)-geranyl diphosphate = (E)-beta-ocimene + diphosphate. The catalysed reaction is (2E)-geranyl diphosphate = terpinolene + diphosphate. It catalyses the reaction (2E)-geranyl diphosphate = gamma-terpinene + diphosphate. It carries out the reaction (2Z,6Z)-farnesyl diphosphate = (Z)-gamma-bisabolene + diphosphate. The enzyme catalyses (2E,6E)-farnesyl diphosphate = (1S,5S,6R)-alpha-bergamotene + diphosphate. The catalysed reaction is (2Z,6Z)-farnesyl diphosphate = (1S,5S,6S)-alpha-bergamotene + diphosphate. Its pathway is secondary metabolite biosynthesis; terpenoid biosynthesis. Functionally, sesquiterpene synthase involved in the biosynthesis of volatile compounds. Mediates the conversion of (2E,6E)-farnesyl diphosphate (FPP) into gamma-gurjunene, (E)-beta-farnesene and (+)-valencene, and of (2Z,6Z)-farnesyl diphosphate ((ZZ)-FPP) into (E)-alpha-bergamotene and (Z)-gamma-bisabolene as well as beta-bisabolene, (Z)-alpha-bergamotene and (E)-gamma-bisabolene to a lower extent. Can act with a low efficiency as a monoterpene synthase with geranyl diphosphate (GPP) as substrate, thus producing beta-myrcene, (E)-beta-ocimene, limonene, terpinolene, gamma-terpinene and (Z)-beta-ocimene. The sequence is that of Terpene synthase 17 from Solanum lycopersicum (Tomato).